The following is a 334-amino-acid chain: ADP-L-glycero-D-manno-heptose-6-epimerase (334 aa).

NADP(+) is bound by residues 11-12 (FI), 32-33 (DN), lysine 39, lysine 54, 77-81 (QGACS), and asparagine 94. Residue tyrosine 141 is the Proton acceptor of the active site. Lysine 145 is a binding site for NADP(+). Position 171 (asparagine 171) interacts with substrate. The NADP(+) site is built by valine 172 and lysine 180. Lysine 180 functions as the Proton acceptor in the catalytic mechanism. Substrate contacts are provided by residues arginine 182, histidine 189, 203-206 (FGSN), arginine 216, and tyrosine 295.

The protein belongs to the NAD(P)-dependent epimerase/dehydratase family. HldD subfamily. Homopentamer. The cofactor is NADP(+).

It carries out the reaction ADP-D-glycero-beta-D-manno-heptose = ADP-L-glycero-beta-D-manno-heptose. It participates in nucleotide-sugar biosynthesis; ADP-L-glycero-beta-D-manno-heptose biosynthesis; ADP-L-glycero-beta-D-manno-heptose from D-glycero-beta-D-manno-heptose 7-phosphate: step 4/4. Its pathway is bacterial outer membrane biogenesis; LOS core biosynthesis. Functionally, catalyzes the interconversion between ADP-D-glycero-beta-D-manno-heptose and ADP-L-glycero-beta-D-manno-heptose via an epimerization at carbon 6 of the heptose. This is ADP-L-glycero-D-manno-heptose-6-epimerase from Neisseria gonorrhoeae.